The chain runs to 445 residues: Ribosomal protein uS12 methylthiotransferase RimO (445 aa).

In terms of domain architecture, MTTase N-terminal spans 4-119 (IKVALVSLGC…LLESIKVFLK (116 aa)). The [4Fe-4S] cluster site is built by Cys13, Cys48, Cys82, Cys156, Cys160, and Cys163. A Radical SAM core domain is found at 142-372 (TTPTYTAYVR…MILQQSISKD (231 aa)). The 67-residue stretch at 375–441 (KEKIGKIYEV…EYDLIGVVYN (67 aa)) folds into the TRAM domain.

The protein belongs to the methylthiotransferase family. RimO subfamily. It depends on [4Fe-4S] cluster as a cofactor.

It is found in the cytoplasm. It carries out the reaction L-aspartate(89)-[ribosomal protein uS12]-hydrogen + (sulfur carrier)-SH + AH2 + 2 S-adenosyl-L-methionine = 3-methylsulfanyl-L-aspartate(89)-[ribosomal protein uS12]-hydrogen + (sulfur carrier)-H + 5'-deoxyadenosine + L-methionine + A + S-adenosyl-L-homocysteine + 2 H(+). In terms of biological role, catalyzes the methylthiolation of an aspartic acid residue of ribosomal protein uS12. The sequence is that of Ribosomal protein uS12 methylthiotransferase RimO from Clostridium botulinum (strain Okra / Type B1).